The primary structure comprises 200 residues: Pyrrolidone-carboxylate peptidase (200 aa).

Catalysis depends on residues Glu79, Cys142, and His166.

It belongs to the peptidase C15 family. In terms of assembly, homotetramer.

The protein resides in the cytoplasm. The enzyme catalyses Release of an N-terminal pyroglutamyl group from a polypeptide, the second amino acid generally not being Pro.. Removes 5-oxoproline from various penultimate amino acid residues except L-proline. The polypeptide is Pyrrolidone-carboxylate peptidase (pcp) (Pyrococcus abyssi (strain GE5 / Orsay)).